Reading from the N-terminus, the 1154-residue chain is Large proline-rich protein BAG6 (1154 aa).

Position 1 is an N-acetylmethionine (Met-1). The Ubiquitin-like domain occupies 17 to 92 (LEVLVKTLDS…HLVERAPPQT (76 aa)). 5 disordered regions span residues 87-125 (RAPP…ASVH), 186-274 (RGGT…HPSP), 387-442 (TMTG…SSHP), 463-531 (QDSG…QGAG), and 568-626 (AQAQ…SAAD). Residue Ser-96 is modified to Phosphoserine. A compositionally biased stretch (low complexity) spans 96–112 (SGASSGTGSASATHGGA). Residue Thr-117 is modified to Phosphothreonine. Over residues 209–218 (VALNSQTSEP) the composition is skewed to polar residues. Copy 1 of the repeat occupies 237 to 271 (RPPTQTPELAPSGPAPAGPAPAGPAPAPETNAPNH). Residues 237-658 (RPPTQTPELA…MASPTITVAM (422 aa)) are 4 X 29 AA approximate repeats. Over residues 249–263 (GPAPAGPAPAGPAPA) the composition is skewed to pro residues. Low complexity predominate over residues 400-409 (GAEAATPGSA). The segment covering 410–426 (QATSLPPSSTTVDSSTE) has biased composition (polar residues). The stretch at 416–444 (PSSTTVDSSTEGAPPPGPAPPPASSHPRV) is repeat 2. 2 stretches are compositionally biased toward pro residues: residues 428–439 (APPPGPAPPPAS) and 508–521 (PTPP…PGGP). Composition is skewed to low complexity over residues 568–581 (AQAQ…AQAP) and 591–609 (PATA…TAGP). 2 consecutive repeat copies span residues 597–624 (SAGT…QPSA) and 630–658 (SQLL…TVAM). The span at 611-622 (PGGPAQPPPPQP) shows a compositional bias: pro residues. Disordered regions lie at residues 673 to 719 (QASQ…ESLP) and 968 to 1154 (PPQT…ADDP). A compositionally biased stretch (pro residues) spans 678–702 (APPPPPPPPPPPPAPEQQSTPPPGS). Phosphoserine is present on residues Ser-986 and Ser-995. Low complexity predominate over residues 1029-1042 (AEPWAAAVPPEWVP). Positions 1032–1062 (WAAAVPPEWVPIIQQDIQSQRKVKPQPPLSD) are required for interaction with GET4. Positions 1034–1076 (AAVPPEWVPIIQQDIQSQRKVKPQPPLSDAYLSGMPAKRRKTM) match the Nuclear localization site motif. A sufficient for the delivery of client proteins to the endoplasmic reticulum region spans residues 1044–1154 (IQQDIQSQRK…NAHRAFADDP (111 aa)). Thr-1075 bears the Phosphothreonine mark. A BAG-similar domain, required and sufficient for interaction with UBL4A region spans residues 1080-1137 (GPQLLLSEAVSRAAKAAGARPLTSPESLSRDLEAPEVQESYRQQLRSDIQKRLQEDPN). Residues 1088 to 1098 (AVSRAAKAAGA) show a composition bias toward low complexity. A phosphoserine mark is found at Ser-1103 and Ser-1139.

Component of the BAG6/BAT3 complex, also named BAT3 complex, at least composed of BAG6, UBL4A and GET4/TRC35. Interacts with GET4; the interaction is direct and localizes BAG6 in the cytosol. Interacts with UBL4A; the interaction is direct and required for UBL4A protein stability. Interacts with AIFM1. Interacts with HSPA2. Interacts with CTCFL. Interacts with p300/EP300. Interacts (via ubiquitin-like domain) with RNF126; required for BAG6-dependent ubiquitination of proteins mislocalized to the cytosol. Interacts (via ubiquitin-like domain) with SGTA; SGTA competes with RNF126 by binding the same region of BAG6, thereby promoting deubiquitination of BAG6-target proteins and rescuing them from degradation. Interacts with ricin A chain. Interacts with VCP and AMFR; both form the VCP/p97-AMFR/gp78 complex. Interacts with SYVN1. Interacts with USP13; the interaction is direct and may mediate UBL4A deubiquitination. Interacts with ZFAND2B. Interacts with KPNA2. Interacts with UBQLN4. Post-translationally, ricin can induce a cleavage by the caspase CASP3. The released C-terminal peptide induces apoptosis.

It localises to the cytoplasm. It is found in the cytosol. The protein localises to the nucleus. The protein resides in the secreted. Its subcellular location is the extracellular exosome. In terms of biological role, ATP-independent molecular chaperone preventing the aggregation of misfolded and hydrophobic patches-containing proteins. Functions as part of a cytosolic protein quality control complex, the BAG6/BAT3 complex, which maintains these client proteins in a soluble state and participates in their proper delivery to the endoplasmic reticulum or alternatively can promote their sorting to the proteasome where they undergo degradation. The BAG6/BAT3 complex is involved in the post-translational delivery of tail-anchored/type II transmembrane proteins to the endoplasmic reticulum membrane. Recruited to ribosomes, it interacts with the transmembrane region of newly synthesized tail-anchored proteins and together with SGTA and ASNA1 mediates their delivery to the endoplasmic reticulum. Client proteins that cannot be properly delivered to the endoplasmic reticulum are ubiquitinated by RNF126, an E3 ubiquitin-protein ligase associated with BAG6 and are sorted to the proteasome. SGTA which prevents the recruitment of RNF126 to BAG6 may negatively regulate the ubiquitination and the proteasomal degradation of client proteins. Similarly, the BAG6/BAT3 complex also functions as a sorting platform for proteins of the secretory pathway that are mislocalized to the cytosol either delivering them to the proteasome for degradation or to the endoplasmic reticulum. The BAG6/BAT3 complex also plays a role in the endoplasmic reticulum-associated degradation (ERAD), a quality control mechanism that eliminates unwanted proteins of the endoplasmic reticulum through their retrotranslocation to the cytosol and their targeting to the proteasome. It maintains these retrotranslocated proteins in an unfolded yet soluble state condition in the cytosol to ensure their proper delivery to the proteasome. BAG6 is also required for selective ubiquitin-mediated degradation of defective nascent chain polypeptides by the proteasome. In this context, it may participate in the production of antigenic peptides and play a role in antigen presentation in immune response. BAG6 is also involved in endoplasmic reticulum stress-induced pre-emptive quality control, a mechanism that selectively attenuates the translocation of newly synthesized proteins into the endoplasmic reticulum and reroutes them to the cytosol for proteasomal degradation. BAG6 may ensure the proper degradation of these proteins and thereby protects the endoplasmic reticulum from protein overload upon stress. By inhibiting the polyubiquitination and subsequent proteasomal degradation of HSPA2 it may also play a role in the assembly of the synaptonemal complex during spermatogenesis. Also positively regulates apoptosis by interacting with and stabilizing the proapoptotic factor AIFM1. By controlling the steady-state expression of the IGF1R receptor, indirectly regulates the insulin-like growth factor receptor signaling pathway. Its function is as follows. Involved in DNA damage-induced apoptosis: following DNA damage, accumulates in the nucleus and forms a complex with p300/EP300, enhancing p300/EP300-mediated p53/TP53 acetylation leading to increase p53/TP53 transcriptional activity. When nuclear, may also act as a component of some chromatin regulator complex that regulates histone 3 'Lys-4' dimethylation (H3K4me2). Functionally, released extracellularly via exosomes, it is a ligand of the natural killer/NK cells receptor NCR3 and stimulates NK cells cytotoxicity. It may thereby trigger NK cells cytotoxicity against neighboring tumor cells and immature myeloid dendritic cells (DC). May mediate ricin-induced apoptosis. This Mus musculus (Mouse) protein is Large proline-rich protein BAG6.